The chain runs to 382 residues: Anhydro-N-acetylmuramic acid kinase (382 aa).

9–16 (GTSLDGID) contacts ATP.

Belongs to the anhydro-N-acetylmuramic acid kinase family.

The catalysed reaction is 1,6-anhydro-N-acetyl-beta-muramate + ATP + H2O = N-acetyl-D-muramate 6-phosphate + ADP + H(+). The protein operates within amino-sugar metabolism; 1,6-anhydro-N-acetylmuramate degradation. Its pathway is cell wall biogenesis; peptidoglycan recycling. Catalyzes the specific phosphorylation of 1,6-anhydro-N-acetylmuramic acid (anhMurNAc) with the simultaneous cleavage of the 1,6-anhydro ring, generating MurNAc-6-P. Is required for the utilization of anhMurNAc either imported from the medium or derived from its own cell wall murein, and thus plays a role in cell wall recycling. The chain is Anhydro-N-acetylmuramic acid kinase from Bacillus cereus (strain 03BB102).